A 117-amino-acid chain; its full sequence is Large ribosomal subunit protein eL18 (117 aa).

This sequence belongs to the eukaryotic ribosomal protein eL18 family.

In Halobacterium salinarum (strain ATCC 29341 / DSM 671 / R1), this protein is Large ribosomal subunit protein eL18.